We begin with the raw amino-acid sequence, 237 residues long: Phosphoribosylaminoimidazole-succinocarboxamide synthase (237 aa).

It belongs to the SAICAR synthetase family.

The catalysed reaction is 5-amino-1-(5-phospho-D-ribosyl)imidazole-4-carboxylate + L-aspartate + ATP = (2S)-2-[5-amino-1-(5-phospho-beta-D-ribosyl)imidazole-4-carboxamido]succinate + ADP + phosphate + 2 H(+). It functions in the pathway purine metabolism; IMP biosynthesis via de novo pathway; 5-amino-1-(5-phospho-D-ribosyl)imidazole-4-carboxamide from 5-amino-1-(5-phospho-D-ribosyl)imidazole-4-carboxylate: step 1/2. The sequence is that of Phosphoribosylaminoimidazole-succinocarboxamide synthase from Listeria monocytogenes serovar 1/2a (strain ATCC BAA-679 / EGD-e).